Consider the following 175-residue polypeptide: DM domain-containing protein mab-23 (175 aa).

Positions 8 to 56 (CQLCANHGIFNQPKKGHKQKCPYRTCPCSLCALNTKRRALDQIERQLKH) form a DNA-binding region, DM. The disordered stretch occupies residues 58–93 (NEPMTGQTATSMASPTPECPLSPTTPKMTPHTPTSG). A compositionally biased stretch (polar residues) spans 59 to 71 (EPMTGQTATSMAS). Over residues 81–91 (TTPKMTPHTPT) the composition is skewed to low complexity.

As to expression, expressed in a limited number of non-sex-specific tissues in males, including 6-8 unidentified neurons of the head, ventral body wall muscle, and the PHCL/R neurons.

The protein resides in the nucleus. In terms of biological role, probable transcription factor that plays a role in the development of the dopaminergic neurons of the male-specific genital sensilla (simple sense organs) known as rays, by negatively regulating the activity of the transcription factor ast-1. Involved in male mating behavior, probably as a result of a role in the differentiation of male-specific diagonal muscles. Required for development of the male proctodeum. May be dispensable in hermaphrodites. This Caenorhabditis elegans protein is DM domain-containing protein mab-23.